The sequence spans 943 residues: Leucine--tRNA ligase (943 aa).

Residues P40 to H51 carry the 'HIGH' region motif. Positions K717 to S721 match the 'KMSKS' region motif. K720 contacts ATP.

This sequence belongs to the class-I aminoacyl-tRNA synthetase family.

The protein localises to the cytoplasm. The enzyme catalyses tRNA(Leu) + L-leucine + ATP = L-leucyl-tRNA(Leu) + AMP + diphosphate. The sequence is that of Leucine--tRNA ligase from Bacteroides fragilis (strain YCH46).